Here is a 209-residue protein sequence, read N- to C-terminus: Ubiquitin-conjugating enzyme E2 S (209 aa).

The 147-residue stretch at 14-160 folds into the UBC core domain; sequence QTIRQVMREL…ARMMTEIHAQ (147 aa). Cys98 serves as the catalytic Glycyl thioester intermediate. The interval 165 to 209 is disordered; it reads GVGATGDAKDDGGPSTKKHAGLDKKLQDKKKEKLLKEKKRMLKRL. Residues 184–199 show a composition bias toward basic and acidic residues; it reads AGLDKKLQDKKKEKLL. Over residues 200-209 the composition is skewed to basic residues; it reads KEKKRMLKRL.

The protein belongs to the ubiquitin-conjugating enzyme family.

It carries out the reaction S-ubiquitinyl-[E1 ubiquitin-activating enzyme]-L-cysteine + [E2 ubiquitin-conjugating enzyme]-L-cysteine = [E1 ubiquitin-activating enzyme]-L-cysteine + S-ubiquitinyl-[E2 ubiquitin-conjugating enzyme]-L-cysteine.. The protein operates within protein modification; protein ubiquitination. Its function is as follows. Catalyzes the covalent attachment of ubiquitin to other proteins. Acts as an essential factor of the anaphase promoting complex/cyclosome (APC/C), a cell cycle-regulated ubiquitin ligase that controls progression through mitosis. Acts by specifically elongating polyubiquitin chains initiated by the E2 enzyme vih/UbcH10 on APC/C substrates, enhancing the degradation of APC/C substrates by the proteasome and promoting mitotic exit. This Drosophila simulans (Fruit fly) protein is Ubiquitin-conjugating enzyme E2 S.